Consider the following 194-residue polypeptide: Peroxiredoxin 2 (194 aa).

Residues proline 2–tyrosine 160 form the Thioredoxin domain. The Cysteine sulfenic acid (-SOH) intermediate role is filled by cysteine 47. Threonine 193 is modified (phosphothreonine). Serine 194 is subject to Phosphoserine.

The protein belongs to the peroxiredoxin family. AhpC/Prx1 subfamily. As to quaternary structure, homodimer; disulfide-linked, upon oxidation. 5 homodimers assemble to form a ring-like decamer. Also exists as a monomer. Post-translationally, the enzyme can be inactivated by further oxidation of the cysteine sulfenic acid (C(P)-SOH) to sulphinic acid (C(P)-SO2H) instead of its condensation to a disulfide bond. It can be reactivated by forming a transient disulfide bond with sulfiredoxin SRXN1, which reduces the cysteine sulfinic acid in an ATP- and Mg-dependent manner. In terms of processing, conjugated to URM1, a ubiquitin-like protein. Detected in the head and body (at protein level).

The protein resides in the cytoplasm. The enzyme catalyses a hydroperoxide + [thioredoxin]-dithiol = an alcohol + [thioredoxin]-disulfide + H2O. Thiol-specific peroxidase that catalyzes the reduction of hydrogen peroxide and organic hydroperoxides to water and alcohols, respectively. Plays a role in cell protection against oxidative stress by detoxifying peroxides and as sensor of hydrogen peroxide-mediated signaling events. Might participate in the signaling cascades of growth factors and tumor necrosis factor-alpha by regulating the intracellular concentrations of H(2)O(2). Reduces an intramolecular disulfide bond in GDPD5 that gates the ability to GDPD5 to drive postmitotic motor neuron differentiation. In Drosophila melanogaster (Fruit fly), this protein is Peroxiredoxin 2.